The chain runs to 419 residues: L-rhamnose isomerase (419 aa).

Mn(2+)-binding residues include His262, Asp294, and Asp296.

It belongs to the rhamnose isomerase family. As to quaternary structure, homotetramer. Requires Mn(2+) as cofactor.

The protein localises to the cytoplasm. The catalysed reaction is L-rhamnopyranose = L-rhamnulose. It functions in the pathway carbohydrate degradation; L-rhamnose degradation; glycerone phosphate from L-rhamnose: step 1/3. Functionally, catalyzes the interconversion of L-rhamnose and L-rhamnulose. In Salmonella paratyphi A (strain AKU_12601), this protein is L-rhamnose isomerase.